The sequence spans 395 residues: Homoserine O-acetyltransferase (395 aa).

The region spanning proline 65–isoleucine 363 is the AB hydrolase-1 domain. Serine 160 (nucleophile) is an active-site residue. Arginine 230 contributes to the substrate binding site. Catalysis depends on residues aspartate 328 and histidine 358. Aspartate 359 serves as a coordination point for substrate.

This sequence belongs to the AB hydrolase superfamily. MetX family. Homodimer.

It is found in the cytoplasm. The enzyme catalyses L-homoserine + acetyl-CoA = O-acetyl-L-homoserine + CoA. It participates in amino-acid biosynthesis; L-methionine biosynthesis via de novo pathway; O-acetyl-L-homoserine from L-homoserine: step 1/1. Its function is as follows. Transfers an acetyl group from acetyl-CoA to L-homoserine, forming acetyl-L-homoserine. This Corynebacterium jeikeium (strain K411) protein is Homoserine O-acetyltransferase.